The sequence spans 745 residues: Single-minded homolog 1-A (745 aa).

Residues 1 to 53 (MKEKSKNAGRTRREKENSEFYELAKLLPLPSAITSQSDKASIIRLTTSYLKMR) enclose the bHLH domain. 2 PAS domains span residues 77 to 147 (GREL…QPYH) and 218 to 288 (PPSA…LVKG). Residues 336–745 (EYKGLQLSLD…GTSVIITNGS (410 aa)) form the Single-minded C-terminal domain. A compositionally biased stretch (polar residues) spans 350–364 (TKPSFTYNSPSNPVT). Disordered regions lie at residues 350 to 413 (TKPS…LTDS) and 529 to 563 (EDSA…EPSK). Positions 368–387 (RVGKSRVSRTKTKTRLSPYS) match the Nuclear localization signal motif. Residues 369 to 381 (VGKSRVSRTKTKT) are compositionally biased toward basic residues. Over residues 532-544 (AVSSAPDGGSASD) the composition is skewed to low complexity.

Efficient DNA binding requires dimerization with another bHLH protein. Heterodimer of sim1a and arnt. Expressed in embryonic forebrain at the eleven somite stage. Detected in brain throughout embryonic development.

It is found in the nucleus. Transcriptional factor that may have pleiotropic effects during embryogenesis and in the adult. The chain is Single-minded homolog 1-A (sim1a) from Danio rerio (Zebrafish).